The following is a 523-amino-acid chain: Acetyl-CoA hydrolase (523 aa).

277-281 (GIGNI) is a CoA binding site. Glu302 (5-glutamyl coenzyme A thioester intermediate) is an active-site residue. Residues Asn392 and Gly396 each contribute to the CoA site.

It belongs to the acetyl-CoA hydrolase/transferase family.

It localises to the cytoplasm. It catalyses the reaction acetyl-CoA + H2O = acetate + CoA + H(+). Functionally, presumably involved in regulating the intracellular acetyl-CoA pool for fatty acid and cholesterol synthesis and fatty acid oxidation. The polypeptide is Acetyl-CoA hydrolase (ACH1) (Kluyveromyces lactis (strain ATCC 8585 / CBS 2359 / DSM 70799 / NBRC 1267 / NRRL Y-1140 / WM37) (Yeast)).